Consider the following 267-residue polypeptide: 4-hydroxy-tetrahydrodipicolinate reductase (267 aa).

Residues 8 to 13 (GAAGRM) and aspartate 34 contribute to the NAD(+) site. Arginine 35 is a binding site for NADP(+). NAD(+) contacts are provided by residues 98 to 100 (GTT) and 122 to 125 (AANF). The active-site Proton donor/acceptor is the histidine 155. Histidine 156 is a binding site for (S)-2,3,4,5-tetrahydrodipicolinate. The Proton donor role is filled by lysine 159. 165–166 (GT) provides a ligand contact to (S)-2,3,4,5-tetrahydrodipicolinate.

It belongs to the DapB family.

It localises to the cytoplasm. The catalysed reaction is (S)-2,3,4,5-tetrahydrodipicolinate + NAD(+) + H2O = (2S,4S)-4-hydroxy-2,3,4,5-tetrahydrodipicolinate + NADH + H(+). It carries out the reaction (S)-2,3,4,5-tetrahydrodipicolinate + NADP(+) + H2O = (2S,4S)-4-hydroxy-2,3,4,5-tetrahydrodipicolinate + NADPH + H(+). It participates in amino-acid biosynthesis; L-lysine biosynthesis via DAP pathway; (S)-tetrahydrodipicolinate from L-aspartate: step 4/4. Catalyzes the conversion of 4-hydroxy-tetrahydrodipicolinate (HTPA) to tetrahydrodipicolinate. The sequence is that of 4-hydroxy-tetrahydrodipicolinate reductase from Pseudomonas entomophila (strain L48).